A 366-amino-acid chain; its full sequence is Aminomethyltransferase (366 aa).

It belongs to the GcvT family. The glycine cleavage system is composed of four proteins: P, T, L and H.

The catalysed reaction is N(6)-[(R)-S(8)-aminomethyldihydrolipoyl]-L-lysyl-[protein] + (6S)-5,6,7,8-tetrahydrofolate = N(6)-[(R)-dihydrolipoyl]-L-lysyl-[protein] + (6R)-5,10-methylene-5,6,7,8-tetrahydrofolate + NH4(+). The glycine cleavage system catalyzes the degradation of glycine. The sequence is that of Aminomethyltransferase from Bordetella avium (strain 197N).